A 185-amino-acid polypeptide reads, in one-letter code: Ribosome-recycling factor (185 aa).

The protein belongs to the RRF family.

It is found in the cytoplasm. Its function is as follows. Responsible for the release of ribosomes from messenger RNA at the termination of protein biosynthesis. May increase the efficiency of translation by recycling ribosomes from one round of translation to another. This is Ribosome-recycling factor from Xanthomonas euvesicatoria pv. vesicatoria (strain 85-10) (Xanthomonas campestris pv. vesicatoria).